Consider the following 85-residue polypeptide: Glutaredoxin (85 aa).

The Glutaredoxin domain maps to 1 to 85 (MQTVTMYTGP…EGGLDGLLNP (85 aa)). A disulfide bridge links Cys-12 with Cys-15.

The protein belongs to the glutaredoxin family. In terms of assembly, monomer.

Its subcellular location is the cytoplasm. Its function is as follows. Has a glutathione-disulfide oxidoreductase activity in the presence of NADPH and glutathione reductase. Reduces low molecular weight disulfides and proteins. This chain is Glutaredoxin (grx), found in Neisseria meningitidis serogroup B (strain ATCC BAA-335 / MC58).